The chain runs to 580 residues: Ran GTPase-activating protein 1 (580 aa).

LRR repeat units follow at residues 48–71 (YEGL…AIAE), 111–134 (GAQL…GFEA), 141–168 (CFTL…ALTE), 207–230 (IGTL…ALAE), 235–258 (NSLL…AMAE), 292–315 (LHKL…SLAE), and 320–343 (KSDL…QVQE). A disordered region spans residues 356 to 429 (SLSDDEDEDD…PPKLPVDAST (74 aa)). Residues 358–399 (SDDEDEDDDDDDEDDDDDEDDENDDEEVEEEEEEVEEEEGGD) show a composition bias toward acidic residues.

It belongs to the RNA1 family. In terms of assembly, homodimer. Identified in a complex with RANBP2 and the ubiquitin-conjugating enzyme E2 (UBE2I). May be sumoylated.

It is found in the cytoplasm. Its subcellular location is the nucleus. It localises to the nucleoplasm. The protein localises to the nucleus envelope. The protein resides in the chromosome. It is found in the centromere. Its subcellular location is the kinetochore. It localises to the cytoskeleton. The protein localises to the spindle. Its function is as follows. GTPase activator for RAN, converting it to the GDP-bound state. Converts cytoplasmic GTP-bound RAN to GDP-bound RAN, which is required for RAN-mediated nuclear import and export. In Xenopus laevis (African clawed frog), this protein is Ran GTPase-activating protein 1 (rangap1).